Here is a 119-residue protein sequence, read N- to C-terminus: Large ribosomal subunit protein bL20 (119 aa).

The protein belongs to the bacterial ribosomal protein bL20 family.

In terms of biological role, binds directly to 23S ribosomal RNA and is necessary for the in vitro assembly process of the 50S ribosomal subunit. It is not involved in the protein synthesizing functions of that subunit. The chain is Large ribosomal subunit protein bL20 from Shewanella halifaxensis (strain HAW-EB4).